We begin with the raw amino-acid sequence, 89 residues long: Putative regulatory protein MAE_11840 (89 aa).

The protein belongs to the RemA family.

This Microcystis aeruginosa (strain NIES-843 / IAM M-2473) protein is Putative regulatory protein MAE_11840.